The chain runs to 737 residues: Ribosome-releasing factor 2, mitochondrial (737 aa).

A mitochondrion-targeting transit peptide spans 1–29; it reads MLKYALHSGGMPRNRLLRQLSAHIFRRSY. The tr-type G domain occupies 31-310; sequence SNIRNIGILA…AVNTYLPAPE (280 aa). Residues 40–47, 104–108, and 158–161 each bind GTP; these read AHIDAGKT, DTPGH, and NKMD.

It belongs to the TRAFAC class translation factor GTPase superfamily. Classic translation factor GTPase family. EF-G/EF-2 subfamily.

Its subcellular location is the mitochondrion. Mitochondrial GTPase that mediates the disassembly of ribosomes from messenger RNA at the termination of mitochondrial protein biosynthesis. Not involved in the GTP-dependent ribosomal translocation step during translation elongation. The sequence is that of Ribosome-releasing factor 2, mitochondrial from Drosophila pseudoobscura pseudoobscura (Fruit fly).